An 893-amino-acid polypeptide reads, in one-letter code: POU domain protein 2, isoform B (893 aa).

Residues 586 to 668 are disordered; the sequence is QMKQQQREDP…STPKPTSGLT (83 aa). The span at 602-617 shows a compositional bias: low complexity; sequence PLAKSPLRSPSLSPVP. A compositionally biased stretch (polar residues) spans 623–646; that stretch reads QQRTPPNSMTANSLGMSSAVMTPN. The segment covering 647–665 has biased composition (low complexity); that stretch reads TPSMQQQPQLQQSTPKPTS. Positions 681–755 constitute a POU-specific domain; the sequence is EETTDLEELE…LLQKWLEDAD (75 aa). Residues 786–845 constitute a DNA-binding region (homeobox); the sequence is RRKKRTSIETTVRTTLEKAFLMNCKPTSEEISQLSERLNMDKEVIRVWFCNRRQKEKRIN.

This sequence belongs to the POU transcription factor family. Class-2 subfamily. Initial expression in cellular blastoderm stage, then in ectodermal stripes during germband extension. Broad expression in the neuroectoderm followed by limitation to discrete subsets of CNS cells, and expression in specific PNS neurons and support cells.

It is found in the nucleus. DNA-binding regulatory protein implicated in early development. Involved in neuronal cell fate decision. May act as an octamer-dependent activator of transcription. Could also play an early role in specific ectodermal cells, and a subsequent role in the embryonic nervous system. The protein is POU domain protein 2, isoform B of Drosophila melanogaster (Fruit fly).